Here is a 542-residue protein sequence, read N- to C-terminus: GMP synthase [glutamine-hydrolyzing] (542 aa).

Residues 28–218 (MLVILDFGSQ…VYHICQCEPT (191 aa)) enclose the Glutamine amidotransferase type-1 domain. Cys-105 (nucleophile) is an active-site residue. Catalysis depends on residues His-192 and Glu-194. In terms of domain architecture, GMPS ATP-PPase spans 219 to 417 (WTTEAFVEES…IGLPEEIVRR (199 aa)). Position 246-252 (246-252 (SGGVDSS)) interacts with ATP.

In terms of assembly, homodimer.

The catalysed reaction is XMP + L-glutamine + ATP + H2O = GMP + L-glutamate + AMP + diphosphate + 2 H(+). It functions in the pathway purine metabolism; GMP biosynthesis; GMP from XMP (L-Gln route): step 1/1. Catalyzes the synthesis of GMP from XMP. The polypeptide is GMP synthase [glutamine-hydrolyzing] (Rippkaea orientalis (strain PCC 8801 / RF-1) (Cyanothece sp. (strain PCC 8801))).